The following is a 503-amino-acid chain: MEIVTYKTVSARSPTVTWSSGFGRAIASIQKRNQDNIRKPLRFYTGLLHCLIKQYEHCLVPPNKSIRFDKGKIEVAALILDLGHQVLGRQIHVRQRIYSWTSITLPKLFTPKELYFLIASPEEENIAFNPTITKGGWISGSFSYPVDYRSNFSLTGMSANILMVPFVPYKYPLNYARFISSIDLMILNEQFPEHECGDIQILKQRNYLYLGVIKNLTWKKSVTGTGQTAPHRILKASFIGSWPDTSLPDRVALRFFNNTRFTIHCHEFSINIENLGLVKNKEKVFGTLATVCCEQIPSLLTTENLPKYLIVQFEVVTQIEEPEPLLFSSNPKLYFTGDVLNATIQLQHNPNYYELLVHAPYDIHFYPSRCHIVILPIRYFTKPDKQILISGYQNEGFFETQVMLWAPGTPLHITLRSFSPNLILPQSTPIATLFYVERMTSQNNEQKDVIAKLSENGHFIGNLKLPRENFLHHDAIADSPLASISKDSATPGPETVFSSVSPS.

Residues 482 to 503 (ASISKDSATPGPETVFSSVSPS) are disordered.

The protein belongs to the herpesviridae U10 family.

This Homo sapiens (Human) protein is U10 protein (U10).